Consider the following 376-residue polypeptide: Heat stress transcription factor A-2a (376 aa).

Residues 137–168 form a disordered region; it reads LKTIKRRRPPPSSPPSSSSSSSSSQHQQQPAA. Residues 151 to 160 are compositionally biased toward low complexity; the sequence is PSSSSSSSSS. Positions 182 to 229 form a coiled coil; the sequence is VNRLQRDKSVLIAEVVKLRQEQQTTRAQMQAMEERISAAEQKQQQMTV. The interval 185-235 is hydrophobic repeat HR-A/B; it reads LQRDKSVLIAEVVKLRQEQQTTRAQMQAMEERISAAEQKQQQMTVFLARAM. The short motif at 265–269 is the Nuclear localization signal element; that stretch reads KKRRR. Disordered stretches follow at residues 296–319 and 332–362; these read VAEP…DTES and KQRE…DDDD. Positions 307 to 316 are enriched in gly residues; it reads GDGGGGGGGD. Positions 318–325 match the AHA motif; it reads ESFWMQLL. Over residues 352-362 the composition is skewed to acidic residues; it reads VDNDEEDDDDD. A Nuclear export signal motif is present at residues 366–373; sequence LVQSIYHL.

It belongs to the HSF family. Class A subfamily. As to quaternary structure, homotrimer. Exhibits temperature-dependent phosphorylation.

The protein resides in the cytoplasm. It localises to the nucleus. In terms of biological role, transcriptional regulator that specifically binds DNA of heat shock promoter elements (HSE). This is Heat stress transcription factor A-2a (HSFA2A) from Oryza sativa subsp. japonica (Rice).